The following is a 174-amino-acid chain: Thiol-disulfide oxidoreductase ResA (174 aa).

Residues 11 to 30 form a helical; Signal-anchor for type II membrane protein membrane-spanning segment; it reads TAILLVLLAAIGYTIYTNFF. One can recognise a Thioredoxin domain in the interval 36–174; that stretch reads VAVGSTAPDF…IERHLESIKP (139 aa). Residues cysteine 74 and cysteine 77 are joined by a disulfide bond.

This sequence belongs to the thioredoxin family. ResA subfamily.

The protein resides in the cell membrane. Its pathway is protein modification; cytochrome c assembly. Its function is as follows. Thiol-disulfide oxidoreductase which is required in disulfide reduction during c-type cytochrome synthesis. May accept reducing equivalents from CcdA, leading to breakage of disulfide bonds in apocytochrome c; following this reduction heme can be covalently attached. In Geobacillus kaustophilus (strain HTA426), this protein is Thiol-disulfide oxidoreductase ResA.